Consider the following 120-residue polypeptide: Ribosome-binding factor A (120 aa).

Belongs to the RbfA family. As to quaternary structure, monomer. Binds 30S ribosomal subunits, but not 50S ribosomal subunits or 70S ribosomes.

The protein resides in the cytoplasm. Its function is as follows. One of several proteins that assist in the late maturation steps of the functional core of the 30S ribosomal subunit. Associates with free 30S ribosomal subunits (but not with 30S subunits that are part of 70S ribosomes or polysomes). Required for efficient processing of 16S rRNA. May interact with the 5'-terminal helix region of 16S rRNA. This Dictyoglomus thermophilum (strain ATCC 35947 / DSM 3960 / H-6-12) protein is Ribosome-binding factor A.